The primary structure comprises 623 residues: Putative chaperone protein ClpB2, chloroplastic (623 aa).

The Clp R domain occupies 1-123; that stretch reads MNDLKFDPNV…KSEVEKLRGE (123 aa). Repeat stretches follow at residues 6 to 71 and 77 to 123; these read FDPN…NQSL and RNLG…LRGE. Residues 129 to 375 form an i region; it reads LKTYGTDLVE…HVKAQLDIQP (247 aa). 172-179 contacts ATP; that stretch reads GEPGVGKT. Positions 368 to 462 form a coiled coil; sequence KAQLDIQPEE…LQEAERQHDV (95 aa). ATP is bound at residue 571–578; sequence GPTGVGKT.

It belongs to the ClpA/ClpB family.

This Arabidopsis thaliana (Mouse-ear cress) protein is Putative chaperone protein ClpB2, chloroplastic (CLPB2).